The primary structure comprises 990 residues: Bifunctional glutamine synthetase adenylyltransferase/adenylyl-removing enzyme (990 aa).

Residues 1–474 form an adenylyl removase region; that stretch reads MIFSAITADL…HYAKLFEGDP (474 aa). The tract at residues 478–990 is adenylyl transferase; that stretch reads AKLPPVDYGA…FNRLIGGEDA (513 aa).

The protein belongs to the GlnE family. Mg(2+) is required as a cofactor.

It carries out the reaction [glutamine synthetase]-O(4)-(5'-adenylyl)-L-tyrosine + phosphate = [glutamine synthetase]-L-tyrosine + ADP. The catalysed reaction is [glutamine synthetase]-L-tyrosine + ATP = [glutamine synthetase]-O(4)-(5'-adenylyl)-L-tyrosine + diphosphate. Involved in the regulation of glutamine synthetase GlnA, a key enzyme in the process to assimilate ammonia. When cellular nitrogen levels are high, the C-terminal adenylyl transferase (AT) inactivates GlnA by covalent transfer of an adenylyl group from ATP to specific tyrosine residue of GlnA, thus reducing its activity. Conversely, when nitrogen levels are low, the N-terminal adenylyl removase (AR) activates GlnA by removing the adenylyl group by phosphorolysis, increasing its activity. The regulatory region of GlnE binds the signal transduction protein PII (GlnB) which indicates the nitrogen status of the cell. This is Bifunctional glutamine synthetase adenylyltransferase/adenylyl-removing enzyme from Rhodopseudomonas palustris (strain TIE-1).